We begin with the raw amino-acid sequence, 380 residues long: Cytochrome b (380 aa).

Helical transmembrane passes span 34-54 (FGSL…LLAM), 78-99 (WLIR…FLHI), 114-134 (WNTG…GYVL), and 179-199 (FFAL…IHLT). Heme b is bound by residues His84 and His98. Heme b contacts are provided by His183 and His197. Residue His202 participates in a ubiquinone binding. 4 consecutive transmembrane segments (helical) span residues 227–247 (IKDI…TLFS), 289–309 (LGGV…PFLH), 321–341 (LSQT…WIGS), and 348–368 (FIII…ILFP).

Belongs to the cytochrome b family. The cytochrome bc1 complex contains 11 subunits: 3 respiratory subunits (MT-CYB, CYC1 and UQCRFS1), 2 core proteins (UQCRC1 and UQCRC2) and 6 low-molecular weight proteins (UQCRH/QCR6, UQCRB/QCR7, UQCRQ/QCR8, UQCR10/QCR9, UQCR11/QCR10 and a cleavage product of UQCRFS1). This cytochrome bc1 complex then forms a dimer. Heme b serves as cofactor.

It localises to the mitochondrion inner membrane. Functionally, component of the ubiquinol-cytochrome c reductase complex (complex III or cytochrome b-c1 complex) that is part of the mitochondrial respiratory chain. The b-c1 complex mediates electron transfer from ubiquinol to cytochrome c. Contributes to the generation of a proton gradient across the mitochondrial membrane that is then used for ATP synthesis. The chain is Cytochrome b (MT-CYB) from Alectoris graeca (Rock partridge).